Here is a 131-residue protein sequence, read N- to C-terminus: Large ribosomal subunit protein bL19 (131 aa).

It belongs to the bacterial ribosomal protein bL19 family.

This protein is located at the 30S-50S ribosomal subunit interface and may play a role in the structure and function of the aminoacyl-tRNA binding site. This is Large ribosomal subunit protein bL19 from Rhodopseudomonas palustris (strain BisA53).